The primary structure comprises 295 residues: tRNA-cytidine(32) 2-sulfurtransferase (295 aa).

The short motif at 63 to 68 (SGGKDS) is the PP-loop motif element. Cysteine 138, cysteine 141, and cysteine 229 together coordinate [4Fe-4S] cluster.

This sequence belongs to the TtcA family. As to quaternary structure, homodimer. Requires Mg(2+) as cofactor. [4Fe-4S] cluster is required as a cofactor.

Its subcellular location is the cytoplasm. It catalyses the reaction cytidine(32) in tRNA + S-sulfanyl-L-cysteinyl-[cysteine desulfurase] + AH2 + ATP = 2-thiocytidine(32) in tRNA + L-cysteinyl-[cysteine desulfurase] + A + AMP + diphosphate + H(+). It functions in the pathway tRNA modification. In terms of biological role, catalyzes the ATP-dependent 2-thiolation of cytidine in position 32 of tRNA, to form 2-thiocytidine (s(2)C32). The sulfur atoms are provided by the cysteine/cysteine desulfurase (IscS) system. The polypeptide is tRNA-cytidine(32) 2-sulfurtransferase (Hyphomonas neptunium (strain ATCC 15444)).